The chain runs to 318 residues: Sensor histidine kinase NatK (318 aa).

3 helical membrane passes run 4-24, 27-47, and 72-82; these read LFQC…AAAF, STAA…LYIW, and VGVVLIGTDIM. The 187-residue stretch at 132-318 folds into the Histidine kinase domain; it reads RNHDTMKHIT…RLEIKIPFQK (187 aa). Position 134 is a phosphohistidine; by autocatalysis (histidine 134).

It is found in the cell membrane. The enzyme catalyses ATP + protein L-histidine = ADP + protein N-phospho-L-histidine.. In terms of biological role, member of the two-component regulatory system NatK/NatR that positively regulates the expression of the natAB operon. Potentially phosphorylates NatR. This Bacillus subtilis (strain 168) protein is Sensor histidine kinase NatK.